The sequence spans 609 residues: Protein NRT1/ PTR FAMILY 7.1 (609 aa).

A run of 2 helical transmembrane segments spans residues Ile67–Leu87 and Trp109–Gly129. Thr133 is subject to Phosphothreonine. The next 10 membrane-spanning stretches (helical) occupy residues Ile136 to Leu156, Ser173 to Gly193, Phe216 to Val236, Leu243 to Leu263, Pro367 to Val387, Ile402 to Tyr422, Met438 to Gln458, Ile474 to Gly494, Met516 to Ile536, and Phe559 to Lys579.

This sequence belongs to the major facilitator superfamily. Proton-dependent oligopeptide transporter (POT/PTR) (TC 2.A.17) family. As to expression, expressed in flowers.

Its subcellular location is the membrane. The protein is Protein NRT1/ PTR FAMILY 7.1 (NPF7.1) of Arabidopsis thaliana (Mouse-ear cress).